The following is a 489-amino-acid chain: mRNA cleavage and polyadenylation factor CLP1 (489 aa).

ATP contacts are provided by residues glutamate 28 and 152–157; that span reads YSGKTT.

It belongs to the Clp1 family. Clp1 subfamily. In terms of assembly, component of a pre-mRNA cleavage factor complex. Interacts directly with PCF11.

It is found in the nucleus. Required for endonucleolytic cleavage during polyadenylation-dependent pre-mRNA 3'-end formation. The polypeptide is mRNA cleavage and polyadenylation factor CLP1 (Candida albicans (strain SC5314 / ATCC MYA-2876) (Yeast)).